The following is a 386-amino-acid chain: Glucose-1-phosphate adenylyltransferase (386 aa).

Alpha-D-glucose 1-phosphate is bound by residues Tyr100, Gly165, 180 to 181 (EK), and Ser191.

Belongs to the bacterial/plant glucose-1-phosphate adenylyltransferase family. As to quaternary structure, homotetramer.

It carries out the reaction alpha-D-glucose 1-phosphate + ATP + H(+) = ADP-alpha-D-glucose + diphosphate. Its pathway is glycan biosynthesis; glycogen biosynthesis. Involved in the biosynthesis of ADP-glucose, a building block required for the elongation reactions to produce glycogen. Catalyzes the reaction between ATP and alpha-D-glucose 1-phosphate (G1P) to produce pyrophosphate and ADP-Glc. This is Glucose-1-phosphate adenylyltransferase from Clostridium botulinum (strain Alaska E43 / Type E3).